The sequence spans 244 residues: Phosphoadenosine 5'-phosphosulfate reductase (244 aa).

The active-site Nucleophile; cysteine thiosulfonate intermediate is the C239.

The protein belongs to the PAPS reductase family. CysH subfamily.

The protein localises to the cytoplasm. The enzyme catalyses [thioredoxin]-disulfide + sulfite + adenosine 3',5'-bisphosphate + 2 H(+) = [thioredoxin]-dithiol + 3'-phosphoadenylyl sulfate. The protein operates within sulfur metabolism; hydrogen sulfide biosynthesis; sulfite from sulfate: step 3/3. Its function is as follows. Catalyzes the formation of sulfite from phosphoadenosine 5'-phosphosulfate (PAPS) using thioredoxin as an electron donor. This is Phosphoadenosine 5'-phosphosulfate reductase from Escherichia coli O6:K15:H31 (strain 536 / UPEC).